A 677-amino-acid polypeptide reads, in one-letter code: Methionine--tRNA ligase (677 aa).

Residues 15-25 (PYANGSIHLGH) carry the 'HIGH' region motif. Zn(2+) contacts are provided by Cys146, Cys149, Cys159, and Cys162. A 'KMSKS' region motif is present at residues 333–337 (KMSKS). Lys336 contributes to the ATP binding site. The 103-residue stretch at 575–677 (DFAKIDLRVA…DGAKPGQQVK (103 aa)) folds into the tRNA-binding domain.

This sequence belongs to the class-I aminoacyl-tRNA synthetase family. MetG type 1 subfamily. In terms of assembly, homodimer. Zn(2+) is required as a cofactor.

The protein localises to the cytoplasm. It carries out the reaction tRNA(Met) + L-methionine + ATP = L-methionyl-tRNA(Met) + AMP + diphosphate. In terms of biological role, is required not only for elongation of protein synthesis but also for the initiation of all mRNA translation through initiator tRNA(fMet) aminoacylation. The polypeptide is Methionine--tRNA ligase (Salmonella paratyphi A (strain AKU_12601)).